We begin with the raw amino-acid sequence, 358 residues long: Magnesium-protoporphyrin IX monomethyl ester [oxidative] cyclase (358 aa).

Belongs to the AcsF family. Requires Fe cation as cofactor.

The catalysed reaction is Mg-protoporphyrin IX 13-monomethyl ester + 3 NADPH + 3 O2 + 2 H(+) = 3,8-divinyl protochlorophyllide a + 3 NADP(+) + 5 H2O. It participates in porphyrin-containing compound metabolism; chlorophyll biosynthesis (light-independent). Functionally, catalyzes the formation of the isocyclic ring in chlorophyll biosynthesis. Mediates the cyclase reaction, which results in the formation of divinylprotochlorophyllide (Pchlide) characteristic of all chlorophylls from magnesium-protoporphyrin IX 13-monomethyl ester (MgPMME). The sequence is that of Magnesium-protoporphyrin IX monomethyl ester [oxidative] cyclase from Synechococcus elongatus (strain ATCC 33912 / PCC 7942 / FACHB-805) (Anacystis nidulans R2).